Reading from the N-terminus, the 79-residue chain is uncharacterized protein (79 aa).

A disordered region spans residues 20–52 (TERGAGLSPAAPPDPSPAIAPTMAEGGVPSPGP).

This is an uncharacterized protein from Homo sapiens (Human).